Here is a 141-residue protein sequence, read N- to C-terminus: HTH-type transcriptional repressor NsrR (141 aa).

One can recognise an HTH rrf2-type domain in the interval 2–129 (QLTSFTDYGL…DNYTLADLVE (128 aa)). The H-T-H motif DNA-binding region spans 28–51 (ISEVTDVYGVSRNHMVKIINQLSR). 3 residues coordinate [2Fe-2S] cluster: cysteine 91, cysteine 96, and cysteine 102.

[2Fe-2S] cluster is required as a cofactor.

In terms of biological role, nitric oxide-sensitive repressor of genes involved in protecting the cell against nitrosative stress. May require iron for activity. In Escherichia coli O139:H28 (strain E24377A / ETEC), this protein is HTH-type transcriptional repressor NsrR.